The sequence spans 608 residues: UvrABC system protein C (608 aa).

The GIY-YIG domain occupies 13–91 (HDAGVYRMYD…IKTYQPRYNV (79 aa)). The UVR domain maps to 201–236 (QQVLEHLIHKMEQASLALDFEEAARIRDQIQAVRAV).

This sequence belongs to the UvrC family. As to quaternary structure, interacts with UvrB in an incision complex.

It localises to the cytoplasm. Its function is as follows. The UvrABC repair system catalyzes the recognition and processing of DNA lesions. UvrC both incises the 5' and 3' sides of the lesion. The N-terminal half is responsible for the 3' incision and the C-terminal half is responsible for the 5' incision. The protein is UvrABC system protein C of Pasteurella multocida (strain Pm70).